Consider the following 389-residue polypeptide: Probable DNA double-strand break repair nuclease NurA (389 aa).

Asp-74 and Asp-151 together coordinate Mn(2+).

Belongs to the NurA family. The cofactor is Mn(2+).

Involved in DNA double-strand break (DSB) repair. Probably acts with HerA to stimulate resection of the 5' strand and produce the long 3' single-strand that is required for RadA loading. The polypeptide is Probable DNA double-strand break repair nuclease NurA (Methanocaldococcus jannaschii (strain ATCC 43067 / DSM 2661 / JAL-1 / JCM 10045 / NBRC 100440) (Methanococcus jannaschii)).